The chain runs to 273 residues: Dermonecrotic toxin LhSicTox-alphaIA1iv (273 aa).

Residue H5 is part of the active site. Mg(2+) contacts are provided by E25 and D27. The active-site Nucleophile is the H41. 2 cysteine pairs are disulfide-bonded: C45-C51 and C47-C190. D85 is a Mg(2+) binding site.

The protein belongs to the arthropod phospholipase D family. Class II subfamily. Mg(2+) serves as cofactor. In terms of tissue distribution, expressed by the venom gland.

The protein localises to the secreted. It catalyses the reaction an N-(acyl)-sphingosylphosphocholine = an N-(acyl)-sphingosyl-1,3-cyclic phosphate + choline. The enzyme catalyses an N-(acyl)-sphingosylphosphoethanolamine = an N-(acyl)-sphingosyl-1,3-cyclic phosphate + ethanolamine. It carries out the reaction a 1-acyl-sn-glycero-3-phosphocholine = a 1-acyl-sn-glycero-2,3-cyclic phosphate + choline. The catalysed reaction is a 1-acyl-sn-glycero-3-phosphoethanolamine = a 1-acyl-sn-glycero-2,3-cyclic phosphate + ethanolamine. Dermonecrotic toxins cleave the phosphodiester linkage between the phosphate and headgroup of certain phospholipids (sphingolipid and lysolipid substrates), forming an alcohol (often choline) and a cyclic phosphate. This toxin acts on sphingomyelin (SM). It may also act on ceramide phosphoethanolamine (CPE), lysophosphatidylcholine (LPC) and lysophosphatidylethanolamine (LPE), but not on lysophosphatidylserine (LPS), and lysophosphatidylglycerol (LPG). It acts by transphosphatidylation, releasing exclusively cyclic phosphate products as second products. Induces dermonecrosis, hemolysis, increased vascular permeability, edema, inflammatory response, and platelet aggregation. The protein is Dermonecrotic toxin LhSicTox-alphaIA1iv of Loxosceles hirsuta (Recluse spider).